We begin with the raw amino-acid sequence, 444 residues long: ATP-dependent protease ATPase subunit HslU (444 aa).

ATP-binding positions include Ile18, 60–65 (GVGKTE), Asp257, Glu322, and Arg394.

It belongs to the ClpX chaperone family. HslU subfamily. As to quaternary structure, a double ring-shaped homohexamer of HslV is capped on each side by a ring-shaped HslU homohexamer. The assembly of the HslU/HslV complex is dependent on binding of ATP.

It is found in the cytoplasm. ATPase subunit of a proteasome-like degradation complex; this subunit has chaperone activity. The binding of ATP and its subsequent hydrolysis by HslU are essential for unfolding of protein substrates subsequently hydrolyzed by HslV. HslU recognizes the N-terminal part of its protein substrates and unfolds these before they are guided to HslV for hydrolysis. This Psychromonas ingrahamii (strain DSM 17664 / CCUG 51855 / 37) protein is ATP-dependent protease ATPase subunit HslU.